The chain runs to 1014 residues: Isoleucine--tRNA ligase (1014 aa).

A 'HIGH' region motif is present at residues 48 to 58; that stretch reads PTANGRPGIHH. The 'KMSKS' region motif lies at 628 to 632; that stretch reads KMSKS. ATP is bound at residue Lys631.

This sequence belongs to the class-I aminoacyl-tRNA synthetase family. IleS type 2 subfamily. As to quaternary structure, monomer. It depends on Zn(2+) as a cofactor.

The protein localises to the cytoplasm. It carries out the reaction tRNA(Ile) + L-isoleucine + ATP = L-isoleucyl-tRNA(Ile) + AMP + diphosphate. Its function is as follows. Catalyzes the attachment of isoleucine to tRNA(Ile). As IleRS can inadvertently accommodate and process structurally similar amino acids such as valine, to avoid such errors it has two additional distinct tRNA(Ile)-dependent editing activities. One activity is designated as 'pretransfer' editing and involves the hydrolysis of activated Val-AMP. The other activity is designated 'posttransfer' editing and involves deacylation of mischarged Val-tRNA(Ile). The polypeptide is Isoleucine--tRNA ligase (Dehalococcoides mccartyi (strain ATCC BAA-2266 / KCTC 15142 / 195) (Dehalococcoides ethenogenes (strain 195))).